The chain runs to 351 residues: Molybdate-binding protein MolA (351 aa).

Residues 1–21 (MKLKSLLIACLLSSLSFSALA) form the signal peptide. The Fe/B12 periplasmic-binding domain occupies 41–322 (RAVVLQHQTL…WLAKALYPQR (282 aa)). Residues 47–48 (HQ), tyrosine 217, arginine 264, and 300–301 (GY) each bind molybdate.

Belongs to the bacterial solute-binding protein 8 family. The complex is composed of two ATP-binding proteins (MolC), two transmembrane proteins (MolB) and a solute-binding protein (MolA).

Its subcellular location is the periplasm. Its activity is regulated as follows. The MolBCA complex shows a decrease in affinity in the presence of increasing concentrations of substrate and nucleotide. Its function is as follows. Part of the ABC transporter complex MolBCA involved in molybdate import. Functions as a low-affinity molybdate transporter. Binds to both molybdate and tungstate, but not to sulfate or phosphate. The polypeptide is Molybdate-binding protein MolA (Haemophilus influenzae (strain ATCC 51907 / DSM 11121 / KW20 / Rd)).